The primary structure comprises 361 residues: Polyribonucleotide 5'-hydroxyl-kinase MJ1315 (361 aa).

39–46 is a binding site for ATP; sequence GGVDSGKT.

Requires a divalent metal cation as cofactor.

The enzyme catalyses a 5'-end dephospho-2'-deoxyribonucleoside-DNA + ATP = a 5'-end 5'-phospho-2'-deoxyribonucleoside-DNA + ADP + H(+). It carries out the reaction a 5'-end dephospho-ribonucleoside-RNA + ATP = a 5'-end 5'-phospho-ribonucleoside-RNA + ADP + H(+). In terms of biological role, polynucleotide kinase that can phosphorylate the 5'-hydroxyl groups of both single-stranded RNA (ssRNA) and single-stranded DNA (ssDNA). Exhibits a strong preference for ssRNA. The sequence is that of Polyribonucleotide 5'-hydroxyl-kinase MJ1315 from Methanocaldococcus jannaschii (strain ATCC 43067 / DSM 2661 / JAL-1 / JCM 10045 / NBRC 100440) (Methanococcus jannaschii).